A 211-amino-acid polypeptide reads, in one-letter code: uncharacterized protein (211 aa).

Positions 105 to 143 (IEENEFDKVRKSSDKLINEIEKTKSSLREDVKTALSEVR) form a coiled coil. Residues 191–211 (QWFTGFVGVVSSVVLIILFYF) traverse the membrane as a helical segment.

The protein belongs to the CCDC90 family.

Its subcellular location is the mitochondrion. The protein localises to the membrane. This is an uncharacterized protein from Schizosaccharomyces pombe (strain 972 / ATCC 24843) (Fission yeast).